Reading from the N-terminus, the 69-residue chain is Guanine nucleotide-binding protein G(I)/G(S)/G(O) subunit gamma-T2 (69 aa).

Cys66 carries the cysteine methyl ester modification. The S-farnesyl cysteine moiety is linked to residue Cys66. Positions 67 to 69 are cleaved as a propeptide — removed in mature form; the sequence is LIS.

It belongs to the G protein gamma family. In terms of assembly, g proteins are composed of 3 units, alpha, beta and gamma. In terms of tissue distribution, retinal cones.

It localises to the cell membrane. Functionally, guanine nucleotide-binding proteins (G proteins) are involved as a modulator or transducer in various transmembrane signaling systems. The beta and gamma chains are required for the GTPase activity, for replacement of GDP by GTP, and for G protein-effector interaction. This Homo sapiens (Human) protein is Guanine nucleotide-binding protein G(I)/G(S)/G(O) subunit gamma-T2 (GNGT2).